A 245-amino-acid polypeptide reads, in one-letter code: Ribosomal RNA small subunit methyltransferase G (245 aa).

S-adenosyl-L-methionine is bound by residues glycine 85, phenylalanine 90, 108 to 110, 136 to 137, and arginine 155; these read DST and AE.

Belongs to the methyltransferase superfamily. RNA methyltransferase RsmG family.

Its subcellular location is the cytoplasm. Its function is as follows. Specifically methylates the N7 position of a guanine in 16S rRNA. The sequence is that of Ribosomal RNA small subunit methyltransferase G from Trichormus variabilis (strain ATCC 29413 / PCC 7937) (Anabaena variabilis).